Consider the following 122-residue polypeptide: Iron-sulfur cluster assembly protein SufA (122 aa).

Residues cysteine 50, cysteine 114, and cysteine 116 each contribute to the [2Fe-2S] cluster site. Residues cysteine 50, cysteine 114, and cysteine 116 each contribute to the [4Fe-4S] cluster site.

Belongs to the HesB/IscA family. Homodimer. Interacts with SufB and SufC.

Functionally, member of gene cluster sufABCDSE that mediates iron-sulfur cluster assembly under oxidative stress and iron limitation conditions. Binds [2Fe-2S] and [4Fe-4S] clusters by mobilizing sulfur atoms provided by the SufS-SufE cysteine desulfurase system and then transfers the assembled Fe-S clusters to target proteins including ferredoxin and aconitase. Seems to act as a Fe-S cluster carrier rather than a scaffold, this role being performed by SufB and SufC. The chain is Iron-sulfur cluster assembly protein SufA (sufA) from Escherichia coli (strain K12).